A 242-amino-acid chain; its full sequence is Ubiquinone biosynthesis O-methyltransferase (242 aa).

Positions 44, 64, 85, and 129 each coordinate S-adenosyl-L-methionine.

The protein belongs to the methyltransferase superfamily. UbiG/COQ3 family.

The catalysed reaction is a 3-demethylubiquinol + S-adenosyl-L-methionine = a ubiquinol + S-adenosyl-L-homocysteine + H(+). The enzyme catalyses a 3-(all-trans-polyprenyl)benzene-1,2-diol + S-adenosyl-L-methionine = a 2-methoxy-6-(all-trans-polyprenyl)phenol + S-adenosyl-L-homocysteine + H(+). It functions in the pathway cofactor biosynthesis; ubiquinone biosynthesis. In terms of biological role, O-methyltransferase that catalyzes the 2 O-methylation steps in the ubiquinone biosynthetic pathway. The polypeptide is Ubiquinone biosynthesis O-methyltransferase (Yersinia pseudotuberculosis serotype O:1b (strain IP 31758)).